Reading from the N-terminus, the 228-residue chain is 3-dehydroquinate dehydratase (228 aa).

3-dehydroquinate-binding positions include 30–32 (EWR) and arginine 62. Histidine 118 acts as the Proton donor/acceptor in catalysis. Lysine 143 acts as the Schiff-base intermediate with substrate in catalysis. The 3-dehydroquinate site is built by arginine 186, serine 205, and glutamine 209.

The protein belongs to the type-I 3-dehydroquinase family. Homodimer.

The enzyme catalyses 3-dehydroquinate = 3-dehydroshikimate + H2O. It participates in metabolic intermediate biosynthesis; chorismate biosynthesis; chorismate from D-erythrose 4-phosphate and phosphoenolpyruvate: step 3/7. Involved in the third step of the chorismate pathway, which leads to the biosynthesis of aromatic amino acids. Catalyzes the cis-dehydration of 3-dehydroquinate (DHQ) and introduces the first double bond of the aromatic ring to yield 3-dehydroshikimate. This Streptococcus pyogenes serotype M12 (strain MGAS9429) protein is 3-dehydroquinate dehydratase.